The primary structure comprises 195 residues: CASP-like protein 1B1 (195 aa).

Residues 1–22 lie on the Cytoplasmic side of the membrane; that stretch reads MGLQNEEKLELGCTGLQPKPKK. A helical membrane pass occupies residues 23 to 43; that stretch reads WVLLMVRVVAFLATAAATLVM. The Extracellular portion of the chain corresponds to 44 to 75; the sequence is ALNKETKTLVVATVGNTPIKVTLTAKFQHTPA. Residues 76-96 form a helical membrane-spanning segment; it reads FVFFVIANGMASFHNLLMIMV. The Cytoplasmic portion of the chain corresponds to 97-109; the sequence is ELCGQKLDYKGMR. The helical transmembrane segment at 110 to 130 threads the bilayer; sequence LAMVAILDMMTVALVSGGASA. Topologically, residues 131-163 are extracellular; that stretch reads ATFMAELGKNGNSHARWDKICDKFETFCDHGGA. The chain crosses the membrane as a helical span at residues 164–184; sequence ALIASSAGLILMMIISVMSIM. The Cytoplasmic segment spans residues 185–195; it reads KLLIKPKSDSS.

It belongs to the Casparian strip membrane proteins (CASP) family. As to quaternary structure, homodimer and heterodimers.

The protein resides in the cell membrane. The protein is CASP-like protein 1B1 of Populus trichocarpa (Western balsam poplar).